A 517-amino-acid polypeptide reads, in one-letter code: Maturase K (517 aa).

The protein belongs to the intron maturase 2 family. MatK subfamily.

The protein localises to the plastid. It localises to the chloroplast. Its function is as follows. Usually encoded in the trnK tRNA gene intron. Probably assists in splicing its own and other chloroplast group II introns. This chain is Maturase K, found in Veronica arvensis (Wall speedwell).